We begin with the raw amino-acid sequence, 59 residues long: UPF0434 protein VS_2060 (59 aa).

Belongs to the UPF0434 family.

In Vibrio atlanticus (strain LGP32) (Vibrio splendidus (strain Mel32)), this protein is UPF0434 protein VS_2060.